The chain runs to 150 residues: Small heat shock protein IbpB (150 aa).

Positions 26-137 constitute a sHSP domain; the sequence is SQEPIDFPPY…QPQRIAIGGG (112 aa).

The protein belongs to the small heat shock protein (HSP20) family. Homodimer. Forms homomultimers of about 100-150 subunits at optimal growth temperatures. Conformation changes to oligomers at high temperatures or high ionic concentrations. The decrease in size of the multimers is accompanied by an increase in chaperone activity.

Its subcellular location is the cytoplasm. Associates with aggregated proteins, together with IbpA, to stabilize and protect them from irreversible denaturation and extensive proteolysis during heat shock and oxidative stress. Aggregated proteins bound to the IbpAB complex are more efficiently refolded and reactivated by the ATP-dependent chaperone systems ClpB and DnaK/DnaJ/GrpE. Its activity is ATP-independent. This is Small heat shock protein IbpB from Pectobacterium atrosepticum (strain SCRI 1043 / ATCC BAA-672) (Erwinia carotovora subsp. atroseptica).